We begin with the raw amino-acid sequence, 426 residues long: D-tagatose-1,6-bisphosphate aldolase subunit KbaZ (426 aa).

This sequence belongs to the GatZ/KbaZ family. KbaZ subfamily. Forms a complex with KbaY.

It participates in carbohydrate metabolism; D-tagatose 6-phosphate degradation; D-glyceraldehyde 3-phosphate and glycerone phosphate from D-tagatose 6-phosphate: step 2/2. Functionally, component of the tagatose-1,6-bisphosphate aldolase KbaYZ that is required for full activity and stability of the Y subunit. Could have a chaperone-like function for the proper and stable folding of KbaY. When expressed alone, KbaZ does not show any aldolase activity. The polypeptide is D-tagatose-1,6-bisphosphate aldolase subunit KbaZ (Escherichia coli O6:H1 (strain CFT073 / ATCC 700928 / UPEC)).